The chain runs to 399 residues: Elongation factor Tu (399 aa).

The region spanning 10 to 204 (KPHVNIGTIG…AVDASIPEPE (195 aa)) is the tr-type G domain. The tract at residues 19-26 (GHVDHGKT) is G1. A GTP-binding site is contributed by 19–26 (GHVDHGKT). Threonine 26 serves as a coordination point for Mg(2+). Positions 60–64 (GITIN) are G2. A G3 region spans residues 81 to 84 (DCPG). Residues 81–85 (DCPGH) and 136–139 (NKCD) each bind GTP. The G4 stretch occupies residues 136–139 (NKCD). Residues 174–176 (SGL) form a G5 region.

This sequence belongs to the TRAFAC class translation factor GTPase superfamily. Classic translation factor GTPase family. EF-Tu/EF-1A subfamily. In terms of assembly, monomer.

Its subcellular location is the cytoplasm. The enzyme catalyses GTP + H2O = GDP + phosphate + H(+). Functionally, GTP hydrolase that promotes the GTP-dependent binding of aminoacyl-tRNA to the A-site of ribosomes during protein biosynthesis. The polypeptide is Elongation factor Tu (Prochlorococcus marinus (strain MIT 9313)).